Reading from the N-terminus, the 728-residue chain is Catalase-peroxidase (728 aa).

Residues 91–218 constitute a cross-link (tryptophyl-tyrosyl-methioninium (Trp-Tyr) (with M-244)); that stretch reads WHSAGTYRIA…LAAVQMGLIY (128 aa). H92 acts as the Proton acceptor in catalysis. Residues 218 to 244 constitute a cross-link (tryptophyl-tyrosyl-methioninium (Tyr-Met) (with W-91)); it reads YVNPEGPDGNPDPVAAARDIRETFARM. H259 lines the heme b pocket.

This sequence belongs to the peroxidase family. Peroxidase/catalase subfamily. Homodimer or homotetramer. Heme b serves as cofactor. Formation of the three residue Trp-Tyr-Met cross-link is important for the catalase, but not the peroxidase activity of the enzyme.

The catalysed reaction is H2O2 + AH2 = A + 2 H2O. It carries out the reaction 2 H2O2 = O2 + 2 H2O. Its function is as follows. Bifunctional enzyme with both catalase and broad-spectrum peroxidase activity. The sequence is that of Catalase-peroxidase from Burkholderia multivorans (strain ATCC 17616 / 249).